The chain runs to 208 residues: N-(5'-phosphoribosyl)anthranilate isomerase (208 aa).

The protein belongs to the TrpF family.

The enzyme catalyses N-(5-phospho-beta-D-ribosyl)anthranilate = 1-(2-carboxyphenylamino)-1-deoxy-D-ribulose 5-phosphate. It functions in the pathway amino-acid biosynthesis; L-tryptophan biosynthesis; L-tryptophan from chorismate: step 3/5. The sequence is that of N-(5'-phosphoribosyl)anthranilate isomerase from Desulforamulus reducens (strain ATCC BAA-1160 / DSM 100696 / MI-1) (Desulfotomaculum reducens).